The chain runs to 464 residues: tRNA modification GTPase MnmE (464 aa).

(6S)-5-formyl-5,6,7,8-tetrahydrofolate contacts are provided by arginine 27, glutamate 90, and lysine 129. The TrmE-type G domain occupies 222-384; the sequence is GVTLVLAGSV…LYDRIRSFIA (163 aa). GTP-binding positions include 232 to 237, 251 to 257, and 276 to 279; these read NVGKSS, SSYAGTT, and DTAG. Position 236 (serine 236) interacts with Mg(2+). Serine 251 lines the K(+) pocket. Threonine 257 is a Mg(2+) binding site. Lysine 464 lines the (6S)-5-formyl-5,6,7,8-tetrahydrofolate pocket.

It belongs to the TRAFAC class TrmE-Era-EngA-EngB-Septin-like GTPase superfamily. TrmE GTPase family. In terms of assembly, homodimer. Heterotetramer of two MnmE and two MnmG subunits. The cofactor is K(+).

It is found in the cytoplasm. Its function is as follows. Exhibits a very high intrinsic GTPase hydrolysis rate. Involved in the addition of a carboxymethylaminomethyl (cmnm) group at the wobble position (U34) of certain tRNAs, forming tRNA-cmnm(5)s(2)U34. This is tRNA modification GTPase MnmE from Borrelia recurrentis (strain A1).